Here is a 317-residue protein sequence, read N- to C-terminus: Ribosomal protein L11 methyltransferase (317 aa).

S-adenosyl-L-methionine is bound by residues Thr-158, Gly-179, Asp-201, and Asn-244.

Belongs to the methyltransferase superfamily. PrmA family.

The protein localises to the cytoplasm. It carries out the reaction L-lysyl-[protein] + 3 S-adenosyl-L-methionine = N(6),N(6),N(6)-trimethyl-L-lysyl-[protein] + 3 S-adenosyl-L-homocysteine + 3 H(+). Functionally, methylates ribosomal protein L11. The chain is Ribosomal protein L11 methyltransferase from Streptococcus agalactiae serotype III (strain NEM316).